A 212-amino-acid chain; its full sequence is Peptide methionine sulfoxide reductase MsrA (212 aa).

The active site involves Cys-52.

It belongs to the MsrA Met sulfoxide reductase family.

It catalyses the reaction L-methionyl-[protein] + [thioredoxin]-disulfide + H2O = L-methionyl-(S)-S-oxide-[protein] + [thioredoxin]-dithiol. It carries out the reaction [thioredoxin]-disulfide + L-methionine + H2O = L-methionine (S)-S-oxide + [thioredoxin]-dithiol. Its function is as follows. Has an important function as a repair enzyme for proteins that have been inactivated by oxidation. Catalyzes the reversible oxidation-reduction of methionine sulfoxide in proteins to methionine. The chain is Peptide methionine sulfoxide reductase MsrA from Salmonella choleraesuis (strain SC-B67).